A 275-amino-acid polypeptide reads, in one-letter code: Putative methylglyoxal reductase DkgA (275 aa).

The active-site Proton donor is tyrosine 51. Residue histidine 107 coordinates substrate. Residue 187-241 participates in NADP(+) binding; the sequence is SPLAQGGEGVFDQKVIRELADKYGKTPAQIVIRWHLDCGLVVIPKSVTPSRIAEN.

The protein belongs to the aldo/keto reductase family. Monomer.

It is found in the cytoplasm. The catalysed reaction is hydroxyacetone + NADP(+) = methylglyoxal + NADPH + H(+). In terms of biological role, aldo-keto reductase that significantly contributes to cellular methylglyoxal detoxification by catalyzing the NADPH-dependent conversion of methylglyoxal to acetol. This chain is Putative methylglyoxal reductase DkgA, found in Salmonella typhi.